Reading from the N-terminus, the 201-residue chain is Small ribosomal subunit protein uS4c (201 aa).

The disordered stretch occupies residues 13-43; the sequence is RRLGDLPGLSRKAIKRPYPPGEHGQKPRKPS. The region spanning 90–154 is the S4 RNA-binding domain; it reads MRLDNTIFRL…SKQLVESYLA (65 aa).

The protein belongs to the universal ribosomal protein uS4 family. Part of the 30S ribosomal subunit. Contacts protein S5. The interaction surface between S4 and S5 is involved in control of translational fidelity.

Its subcellular location is the plastid. It is found in the chloroplast. Its function is as follows. One of the primary rRNA binding proteins, it binds directly to 16S rRNA where it nucleates assembly of the body of the 30S subunit. In terms of biological role, with S5 and S12 plays an important role in translational accuracy. This is Small ribosomal subunit protein uS4c (rps4) from Porphyra purpurea (Red seaweed).